We begin with the raw amino-acid sequence, 494 residues long: Cardiolipin synthase (494 aa).

The next 2 helical transmembrane spans lie at 14–34 (IILNSIFIGAFILNLLFAFTI) and 45–65 (IWAWLLVLVFLPLFGFILYLL). 2 consecutive PLD phosphodiesterase domains span residues 229 to 256 (MNNRNHRKIVVIDGQIGYVGGFNVGDEY) and 407 to 434 (DNGFLHSKTLVIDDEIASVGTANMDHRS). Catalysis depends on residues H234, K236, D241, H412, K414, and D419.

Belongs to the phospholipase D family. Cardiolipin synthase subfamily.

It is found in the cell membrane. The enzyme catalyses 2 a 1,2-diacyl-sn-glycero-3-phospho-(1'-sn-glycerol) = a cardiolipin + glycerol. In terms of biological role, catalyzes the reversible phosphatidyl group transfer from one phosphatidylglycerol molecule to another to form cardiolipin (CL) (diphosphatidylglycerol) and glycerol. The chain is Cardiolipin synthase (cls) from Staphylococcus aureus (strain Mu50 / ATCC 700699).